Reading from the N-terminus, the 323-residue chain is Acetyl esterase (323 aa).

The Involved in the stabilization of the negatively charged intermediate by the formation of the oxyanion hole motif lies at His-91–Gly-93. Residues Ser-165, Asp-262, and His-292 contribute to the active site.

It belongs to the 'GDXG' lipolytic enzyme family. In terms of assembly, homodimer. Interacts with MalT and MelA.

It is found in the cytoplasm. Functionally, displays esterase activity towards short chain fatty esters (acyl chain length of up to 8 carbons). Able to hydrolyze triacetylglycerol (triacetin) and tributyrylglycerol (tributyrin), but not trioleylglycerol (triolein) or cholesterol oleate. Negatively regulates MalT activity by antagonizing maltotriose binding. Inhibits MelA galactosidase activity. The chain is Acetyl esterase from Salmonella agona (strain SL483).